The following is a 207-amino-acid chain: Glycerol-3-phosphate acyltransferase (207 aa).

6 helical membrane-spanning segments follow: residues 8–28, 64–84, 92–112, 122–142, 154–174, and 176–196; these read NIVF…LILA, LGIA…LVGI, TLWA…YLGL, LGVY…VWIV, SLLG…GLGI, and SNIP…PNIV.

The protein belongs to the PlsY family. Probably interacts with PlsX.

It localises to the cell inner membrane. It catalyses the reaction an acyl phosphate + sn-glycerol 3-phosphate = a 1-acyl-sn-glycero-3-phosphate + phosphate. Its pathway is lipid metabolism; phospholipid metabolism. Catalyzes the transfer of an acyl group from acyl-phosphate (acyl-PO(4)) to glycerol-3-phosphate (G3P) to form lysophosphatidic acid (LPA). This enzyme utilizes acyl-phosphate as fatty acyl donor, but not acyl-CoA or acyl-ACP. This Aliarcobacter butzleri (strain RM4018) (Arcobacter butzleri) protein is Glycerol-3-phosphate acyltransferase.